Consider the following 681-residue polypeptide: MNDIKNIRNIGIIAHVDAGKTTTTERILFFSGFSHKIGEVHTGNTITDWMKQEQERGITITSASVTFFWKTNFYNSSINLIDTPGHVDFTIEVERSLRVLDGAVILICASSGIQPQTETVWNQSEKFNIPKILFVNKLDRIGAKYLSIIENIKKKFFCNILIINLNIGIENSFSGIIDLINMKELIWNNSQLEIRNITNKNFDISNKYRNILLETLSEYDDIFLEKYINSNFSIKDIIESIRKLVILNKIIPIACGSSLKNKGIEFLLDSIVNFLPSPIDIGIKNVSNINYSVNIKSKFLALLFKVFNDPYLGLLSFIRIYSGKIEPGQIIFNNSKNIKEKIFRIIRMFANSKKDLNIASAGDIVVLIGLKNSFTGDTLSFDNEKVLLEKINIPLPVISVSVEPIVKNDYEKLLNLINKFCKEDPSLLFKINENTGELILSGMGELHLEIIIDRINNEFNIKTKTSKPQVSYKESIKKTIIQEGKYIKQTGGRGQYGHVVLKIEPILIEKDDFIFKIEVVGGVIPKEYFLSIEKGILEQIKCGVVLGYPVTKIKITLINGSFHPVDSSEYAFKNAASIALKEALKKANSFLLEPIMKVEIISPKEYLGIVISDISKKRGNIISVVDNNNNLKIINSLIPLRELFGYSTDLRSNTKGRANYNMEFHNYSETPNYILEKIKKK.

In terms of domain architecture, tr-type G spans 5–279 (KNIRNIGIIA…SIVNFLPSPI (275 aa)). Residues 14–21 (AHVDAGKT), 82–86 (DTPGH), and 136–139 (NKLD) contribute to the GTP site.

This sequence belongs to the TRAFAC class translation factor GTPase superfamily. Classic translation factor GTPase family. EF-G/EF-2 subfamily.

Its subcellular location is the cytoplasm. Catalyzes the GTP-dependent ribosomal translocation step during translation elongation. During this step, the ribosome changes from the pre-translocational (PRE) to the post-translocational (POST) state as the newly formed A-site-bound peptidyl-tRNA and P-site-bound deacylated tRNA move to the P and E sites, respectively. Catalyzes the coordinated movement of the two tRNA molecules, the mRNA and conformational changes in the ribosome. This Carsonella ruddii (strain PV) protein is Elongation factor G.